The chain runs to 694 residues: DNA primase (694 aa).

The segment at 41–65 (CPFHDDKSPSFTVSPAKQFYYCFSC) adopts a CHC2-type zinc-finger fold. The region spanning 265 to 348 (DQAVVVEGYF…QGQVQLRVLN (84 aa)) is the Toprim domain. Mg(2+) is bound by residues Glu271, Asp317, and Asp319.

Belongs to the DnaG primase family. As to quaternary structure, monomer. Interacts with DnaB. Zn(2+) serves as cofactor. Requires Mg(2+) as cofactor.

The catalysed reaction is ssDNA + n NTP = ssDNA/pppN(pN)n-1 hybrid + (n-1) diphosphate.. Functionally, RNA polymerase that catalyzes the synthesis of short RNA molecules used as primers for DNA polymerase during DNA replication. This is DNA primase from Synechococcus elongatus (strain ATCC 33912 / PCC 7942 / FACHB-805) (Anacystis nidulans R2).